A 65-amino-acid polypeptide reads, in one-letter code: Large ribosomal subunit protein bL35 (65 aa).

Residues 1-10 (MPKMKTDRGA) are compositionally biased toward basic and acidic residues. Positions 1–24 (MPKMKTDRGAAKRFKKTGSGGFKC) are disordered.

It belongs to the bacterial ribosomal protein bL35 family.

The sequence is that of Large ribosomal subunit protein bL35 from Tolumonas auensis (strain DSM 9187 / NBRC 110442 / TA 4).